The chain runs to 1324 residues: DNA mismatch repair protein MSH6 (1324 aa).

The span at 1-25 (MAPSRRQISGRSPLVNQQRQITSFF) shows a compositional bias: polar residues. Disordered stretches follow at residues 1-114 (MAPS…SPPQ) and 197-294 (KVVT…SKTD). Over residues 27-55 (KSASSSSSPSPSPSPSLSNKKTPKSNNPN) the composition is skewed to low complexity. Positions 56 to 67 (PKSPSPSPSPPK) are enriched in pro residues. Over residues 71 to 83 (KLNPNPSSNLPAR) the composition is skewed to low complexity. Residues 201–224 (DSDDDVEMGNVEEDKSDGDDSSDE) show a composition bias toward acidic residues. Residues 225–235 (DWGKNVGKEVC) are compositionally biased toward basic and acidic residues. Positions 236-261 (ESEEDDVELVDENEMDEEELVEEKDE) are enriched in acidic residues. A compositionally biased stretch (basic and acidic residues) spans 262 to 273 (ETSKVNRVSKTD). 1083-1090 (GPNMGGKS) contacts ATP.

It belongs to the DNA mismatch repair MutS family. In terms of assembly, heterodimer consisting of MSH2-MSH6 (MutS alpha).

The protein resides in the nucleus. In terms of biological role, component of the post-replicative DNA mismatch repair system (MMR). Forms the heterodimer MutS alpha (MSH2-MSH6 heterodimer) which binds to DNA mismatches thereby initiating DNA repair. MutS alpha recognizes single base mismatches and trinucleotide insertion-deletion loops (IDL) in the DNA. Is involved in a UV-B-induced DNA damage response pathway. The sequence is that of DNA mismatch repair protein MSH6 (MSH6) from Arabidopsis thaliana (Mouse-ear cress).